Reading from the N-terminus, the 169-residue chain is Der GTPase-activating protein YihI (169 aa).

Disordered regions lie at residues 1 to 99 (MKPS…QAEL) and 146 to 169 (SYDD…LRGN). A compositionally biased stretch (basic residues) spans 10–19 (SKGHAKARRK). Over residues 20-30 (TREELDQEARD) the composition is skewed to basic and acidic residues. A compositionally biased stretch (basic residues) spans 31–40 (RKRQKKRRGH). The span at 49–58 (GNTTSGSKGQ) shows a compositional bias: polar residues. Residues 147–159 (YDDDEEEEEDEKQ) show a composition bias toward acidic residues. Over residues 160 to 169 (EDMMRLLRGN) the composition is skewed to basic and acidic residues.

The protein belongs to the YihI family. In terms of assembly, interacts with Der.

In terms of biological role, a GTPase-activating protein (GAP) that modifies Der/EngA GTPase function. May play a role in ribosome biogenesis. This Escherichia coli O45:K1 (strain S88 / ExPEC) protein is Der GTPase-activating protein YihI.